The primary structure comprises 723 residues: MSEKQVFSTEWAGKTLSVEVGQLAKQASGAALIRYGDTVVLTAAVGSKKPRPGDFFPLTVNYEEKMYSVGKVPGGFLKREGRPSDRATLTARLIDRPIRPLFAEGFRNEVQITSTVFSVDQDCSPEMAAMLGSSVALVISDIPFEGPIAGVDVGRIDGKYVINPTIEQAEKSDISLTVAGTYDAINMVEAGAKEVSEEAMLEAIMFGHEEIKRLCEFQQQIIAAVGKEKREIELFVSDPELEAEVKAASEGKMKAAIKTEEKKAREAAIEEVKEEILESYKAKELENEAEILGEVAHILEMIEKDEMRRLISQDKIRPDGRKVNEIRPLSSEVGMLPRVHGSGLFTRGQTQALSVCTLAPLREHQIIDGLGTEEYKRFMHHYNFPQFSVGETGPRRAPGRREIGHGALGERALQYVIPSEEEFPYTIRLVSEVLESNGSSSQASICGSTLAMLDAGVPIKAPVAGIAMGLVKLGDDYTILSDIQGMEDHFGDMDFKVAGTKDGITALQMDIKIDGLSRQILDEALTQAKEGRLHILEHLTSTISEPREELSAYAPKIITLNIKPEKIKDVIGPGGKQINAIIEETGVKIDIEQDGTVYIASQDQAMNRKAIAIIEDIVREVEVGEVYTGKVRRIEKFGAFVELFKGTDGLVHISELAHERVGKVEDILKLGDEVTVKVIEVDHQGRVNLSRKALLEKKEQPEGDKKPQAEKKFYPKTKKPESK.

The Mg(2+) site is built by aspartate 488 and aspartate 494. The KH domain maps to 555 to 614 (PKIITLNIKPEKIKDVIGPGGKQINAIIEETGVKIDIEQDGTVYIASQDQAMNRKAIAII). The 69-residue stretch at 624–692 (GEVYTGKVRR…HQGRVNLSRK (69 aa)) folds into the S1 motif domain. Residues 692-723 (KALLEKKEQPEGDKKPQAEKKFYPKTKKPESK) are disordered. Over residues 693–723 (ALLEKKEQPEGDKKPQAEKKFYPKTKKPESK) the composition is skewed to basic and acidic residues.

This sequence belongs to the polyribonucleotide nucleotidyltransferase family. It depends on Mg(2+) as a cofactor.

The protein localises to the cytoplasm. The catalysed reaction is RNA(n+1) + phosphate = RNA(n) + a ribonucleoside 5'-diphosphate. Involved in mRNA degradation. Catalyzes the phosphorolysis of single-stranded polyribonucleotides processively in the 3'- to 5'-direction. The protein is Polyribonucleotide nucleotidyltransferase of Listeria innocua serovar 6a (strain ATCC BAA-680 / CLIP 11262).